Consider the following 907-residue polypeptide: Catenin alpha-1 (907 aa).

Threonine 2 carries the N-acetylthreonine modification. The tract at residues threonine 2 to cysteine 228 is involved in homodimerization. A Glycyl lysine isopeptide (Lys-Gly) (interchain with G-Cter in SUMO2) cross-link involves residue lysine 57. The segment at valine 97 to tyrosine 148 is interaction with JUP and CTNNB1. 4 positions are modified to phosphoserine: serine 264, serine 268, serine 296, and serine 298. An interaction with alpha-actinin region spans residues threonine 326–phenylalanine 395. Position 635 is a phosphothreonine (threonine 635). At serine 642 the chain carries Phosphoserine. Phosphothreonine is present on threonine 646. 2 positions are modified to phosphoserine: serine 653 and serine 656. Residue threonine 659 is modified to Phosphothreonine. Lysine 798 participates in a covalent cross-link: Glycyl lysine isopeptide (Lys-Gly) (interchain with G-Cter in SUMO2). Position 852 is a phosphoserine (serine 852). Residues proline 865–threonine 881 show a composition bias toward basic and acidic residues. The tract at residues proline 865–valine 895 is disordered. A compositionally biased stretch (basic residues) spans lysine 882 to valine 892.

The protein belongs to the vinculin/alpha-catenin family. As to quaternary structure, monomer and homodimer; the monomer preferentially binds to CTNNB1 and the homodimer to actin. Component of an cadherin:catenin adhesion complex composed of at least of CDH26, beta-catenin/CTNNB1, alpha-catenin/CTNNA1 and p120 catenin/CTNND1. Possible component of an E-cadherin/ catenin adhesion complex together with E-cadherin/CDH1 and beta-catenin/CTNNB1 or gamma-catenin/JUP; the complex is located to adherens junctions. The stable association of CTNNA1 is controversial as CTNNA1 was shown not to bind to F-actin when assembled in the complex. Alternatively, the CTNNA1-containing complex may be linked to F-actin by other proteins such as LIMA1. Binds AFDN and F-actin. Interacts with ARHGAP21. Interacts with AJUBA. Interacts with LIMA1. Interacts with vinculin/VCL. Interacts with TJP2/ZO2 (via N-terminus). Interacts with TJP1/ZO1 (via N-terminus). Post-translationally, sumoylated. In terms of processing, phosphorylation seems to contribute to the strength of cell-cell adhesion rather than to the basic capacity for cell-cell adhesion.

The protein localises to the cytoplasm. It localises to the cytoskeleton. Its subcellular location is the cell junction. The protein resides in the adherens junction. It is found in the cell membrane. The protein localises to the nucleus. Functionally, associates with the cytoplasmic domain of a variety of cadherins. The association of catenins to cadherins produces a complex which is linked to the actin filament network, and which seems to be of primary importance for cadherins cell-adhesion properties. Can associate with both E- and N-cadherins. Originally believed to be a stable component of E-cadherin/catenin adhesion complexes and to mediate the linkage of cadherins to the actin cytoskeleton at adherens junctions. In contrast, cortical actin was found to be much more dynamic than E-cadherin/catenin complexes and CTNNA1 was shown not to bind to F-actin when assembled in the complex suggesting a different linkage between actin and adherens junctions components. The homodimeric form may regulate actin filament assembly and inhibit actin branching by competing with the Arp2/3 complex for binding to actin filaments. Involved in the regulation of WWTR1/TAZ, YAP1 and TGFB1-dependent SMAD2 and SMAD3 nuclear accumulation. May play a crucial role in cell differentiation. In Oryctolagus cuniculus (Rabbit), this protein is Catenin alpha-1.